The chain runs to 63 residues: Cytochrome c oxidase subunit 7C, mitochondrial (63 aa).

A mitochondrion-targeting transit peptide spans 1 to 16 (MLGQSIRRFTTSVVRR). Residues 17–33 (SHYEEGPGKNLPFSVEN) lie on the Mitochondrial matrix side of the membrane. Position 25 is an N6-acetyllysine; alternate (Lys-25). Residue Lys-25 is modified to N6-succinyllysine; alternate. The chain crosses the membrane as a helical span at residues 34-60 (KWRLLAMMTLYFGSGFAAPFFIVRHQL). The Mitochondrial intermembrane portion of the chain corresponds to 61-63 (LKK).

This sequence belongs to the cytochrome c oxidase VIIc family. Component of the cytochrome c oxidase (complex IV, CIV), a multisubunit enzyme composed of 14 subunits. The complex is composed of a catalytic core of 3 subunits MT-CO1, MT-CO2 and MT-CO3, encoded in the mitochondrial DNA, and 11 supernumerary subunits COX4I, COX5A, COX5B, COX6A, COX6B, COX6C, COX7A, COX7B, COX7C, COX8 and NDUFA4, which are encoded in the nuclear genome. The complex exists as a monomer or a dimer and forms supercomplexes (SCs) in the inner mitochondrial membrane with NADH-ubiquinone oxidoreductase (complex I, CI) and ubiquinol-cytochrome c oxidoreductase (cytochrome b-c1 complex, complex III, CIII), resulting in different assemblies (supercomplex SCI(1)III(2)IV(1) and megacomplex MCI(2)III(2)IV(2)). Interacts with RAB5IF.

The protein localises to the mitochondrion inner membrane. The protein operates within energy metabolism; oxidative phosphorylation. Functionally, component of the cytochrome c oxidase, the last enzyme in the mitochondrial electron transport chain which drives oxidative phosphorylation. The respiratory chain contains 3 multisubunit complexes succinate dehydrogenase (complex II, CII), ubiquinol-cytochrome c oxidoreductase (cytochrome b-c1 complex, complex III, CIII) and cytochrome c oxidase (complex IV, CIV), that cooperate to transfer electrons derived from NADH and succinate to molecular oxygen, creating an electrochemical gradient over the inner membrane that drives transmembrane transport and the ATP synthase. Cytochrome c oxidase is the component of the respiratory chain that catalyzes the reduction of oxygen to water. Electrons originating from reduced cytochrome c in the intermembrane space (IMS) are transferred via the dinuclear copper A center (CU(A)) of subunit 2 and heme A of subunit 1 to the active site in subunit 1, a binuclear center (BNC) formed by heme A3 and copper B (CU(B)). The BNC reduces molecular oxygen to 2 water molecules using 4 electrons from cytochrome c in the IMS and 4 protons from the mitochondrial matrix. The chain is Cytochrome c oxidase subunit 7C, mitochondrial (COX7C) from Sus scrofa (Pig).